The sequence spans 351 residues: Cell cycle control protein 50B (351 aa).

Residues 1-33 (MTWSATARGAHQPDNTAFTQQRLPAWQPLLSAS) lie on the Cytoplasmic side of the membrane. The helical transmembrane segment at 34-54 (IALPLFFCAGLAFIGLGLGLY) threads the bilayer. Residues 55–315 (YSSNGIKELE…SISWMGGKNP (261 aa)) are Exoplasmic loop-facing. 3 N-linked (GlcNAc...) asparagine glycosylation sites follow: asparagine 75, asparagine 213, and asparagine 286. A helical membrane pass occupies residues 316-336 (FLGIAYLVVGSLCILTGFVML). Residues 337–351 (VVYIRYQDQDDDDEE) are Cytoplasmic-facing.

Belongs to the CDC50/LEM3 family. Component of a P4-ATPase flippase complex which consists of a catalytic alpha subunit and an accessory beta subunit. Interacts with alpha subunits ATP8A1, ATP8B1, ATP8B2 and ATP8B4.

Its subcellular location is the cell membrane. Functionally, accessory component of a P4-ATPase flippase complex which catalyzes the hydrolysis of ATP coupled to the transport of aminophospholipids from the outer to the inner leaflet of various membranes and ensures the maintenance of asymmetric distribution of phospholipids. Phospholipid translocation also seems to be implicated in vesicle formation and in uptake of lipid signaling molecules. The beta subunit may assist in binding of the phospholipid substrate. Can mediate the export of alpha subunits ATP8A1, ATP8B1, ATP8B2 and ATP8B4 from the ER to the plasma membrane. The chain is Cell cycle control protein 50B (TMEM30B) from Homo sapiens (Human).